We begin with the raw amino-acid sequence, 693 residues long: Elongation factor G (693 aa).

The tr-type G domain occupies 9-283 (ERVRNIGIIA…AVCDYLPSPL (275 aa)). GTP-binding positions include 18 to 25 (AHIDAGKT), 82 to 86 (DTPGH), and 136 to 139 (NKMD).

This sequence belongs to the TRAFAC class translation factor GTPase superfamily. Classic translation factor GTPase family. EF-G/EF-2 subfamily.

The protein localises to the cytoplasm. Its function is as follows. Catalyzes the GTP-dependent ribosomal translocation step during translation elongation. During this step, the ribosome changes from the pre-translocational (PRE) to the post-translocational (POST) state as the newly formed A-site-bound peptidyl-tRNA and P-site-bound deacylated tRNA move to the P and E sites, respectively. Catalyzes the coordinated movement of the two tRNA molecules, the mRNA and conformational changes in the ribosome. This chain is Elongation factor G, found in Dehalococcoides mccartyi (strain ATCC BAA-2100 / JCM 16839 / KCTC 5957 / BAV1).